The following is an 835-amino-acid chain: BCL11 transcription factor A (835 aa).

Basic residues predominate over residues 1-12; sequence MSRRKQGKPQHL. A disordered region spans residues 1–41; the sequence is MSRRKQGKPQHLSKREFSPEPLEAILTDDEPDHGPLGAPEG. The required for nuclear body formation and for SUMO1 recruitment stretch occupies residues 1-210; the sequence is MSRRKQGKPQ…SEHGSPLTPR (210 aa). Residues 45 to 71 form a C2HC-type zinc finger; that stretch reads LLTCGQCQMNFPLGDILIFIEHKRKQC. The Zn(2+) site is built by Cys-48, Cys-51, His-66, and Cys-71. Residue Ser-86 is modified to Phosphoserine. Glycyl lysine isopeptide (Lys-Gly) (interchain with G-Cter in SUMO2) cross-links involve residues Lys-123 and Lys-164. The segment at 170-193 adopts a C2H2-type 1 zinc-finger fold; that stretch reads YTCTTCKQPFTSAWFLLQHAQNTH. Ser-205 carries the phosphoserine modification. The residue at position 271 (Arg-271) is an Asymmetric dimethylarginine. The interval 323 to 376 is disordered; the sequence is AGNTSSPPLSPGRPSPMQRLLQPFQPGSKPPFLATPPLPPLQSAPPPSQPPVKS. Residues Ser-332 and Ser-337 each carry the phosphoserine modification. Pro residues predominate over residues 355 to 372; that stretch reads LATPPLPPLQSAPPPSQP. C2H2-type zinc fingers lie at residues 377-399 and 405-429; these read KSCE…RRSH and YKCN…THMH. The segment covering 421 to 430 has biased composition (basic residues); sequence KRHMKTHMHK. 3 disordered regions span residues 421-458, 471-512, and 572-619; these read KRHM…LVGS, KSEN…ERVD, and RGHL…GLSK. A compositionally biased stretch (polar residues) spans 441 to 450; that stretch reads GLSTASSPEP. Phosphoserine is present on residues Ser-446 and Ser-447. The segment covering 482–506 has biased composition (acidic residues); the sequence is NGDEEEEEDDEEEEEEEEEEEEELT. Positions 574-584 are enriched in basic and acidic residues; it reads HLAEAEGHRDT. Phosphoserine is present on Ser-608. Lys-620 participates in a covalent cross-link: Glycyl lysine isopeptide (Lys-Gly) (interchain with G-Cter in SUMO2). Ser-625 and Ser-630 each carry phosphoserine. Lys-634 participates in a covalent cross-link: Glycyl lysine isopeptide (Lys-Gly) (interchain with G-Cter in SUMO1). A disordered region spans residues 678–740; the sequence is DSRQSPFASS…GRPSSKEGRR (63 aa). Over residues 682-696 the composition is skewed to low complexity; the sequence is SPFASSSEHSSENGS. Residue Thr-701 is modified to Phosphothreonine. Gly residues predominate over residues 706–720; it reads LDGGISGRSGTGSGG. A DNA-binding region spans residues 737–835; that stretch reads EGRRSDTCEY…RVLNNDIKTE (99 aa). Residues 742-764 form a C2H2-type 4 zinc finger; it reads DTCEYCGKVFKNCSNLTVHRRSH. Zn(2+) is bound by residues Cys-744, Cys-747, His-760, and His-764. The interval 765–769 is disordered; it reads TGERP. A C2H2-type 5 zinc finger spans residues 770 to 792; sequence YKCELCNYACAQSSKLTRHMKTH. Residues Cys-772, Cys-775, His-788, and His-792 each contribute to the Zn(2+) site. The interval 793–799 is disordered; the sequence is GQVGKDV. The C2H2-type 6 zinc-finger motif lies at 800-823; sequence YKCEICKMPFSVYSTLEKHMKKWH. 4 residues coordinate Zn(2+): Cys-802, Cys-805, His-818, and His-823. Lys-833 participates in a covalent cross-link: Glycyl lysine isopeptide (Lys-Gly) (interchain with G-Cter in SUMO2).

Homotetrameric; self-associates via C2HC-type zinc finger domain. Interacts with MTA2, a component of the nucleosome remodeling and deacetylase (NuRD) repressor complex. Interacts (via its C2H2-type zinc finger domains 4, 5 and 6) with promoter region of gamma-globulin. Interacts with NR2F1, PIAS3, NR2F2 and NR2F6. Isoform 1, isoform 2 and isoform 3 form homodimers and heterodimers. Isoform 2 interacts with TBR1. Sumoylated with SUMO1. As to expression, expressed at high levels in brain, spleen thymus, bone marrow and testis. Expressed in CD34-positive myeloid precursor cells, B-cells, monocytes and megakaryocytes. Expression is tightly regulated during B-cell development. Expressed in fetal and adult brain, and in the plasmacytoid dendritic cell.

Its subcellular location is the cytoplasm. The protein resides in the nucleus. It is found in the chromosome. It localises to the nucleus matrix. Its function is as follows. Transcription factor. Associated with the BAF SWI/SNF chromatin remodeling complex. Binds to the 5'-TGACCA-3' sequence motif in regulatory regions of target genes, including a distal promoter of the HBG1 hemoglobin subunit gamma-1 gene. Involved in regulation of the developmental switch from gamma- to beta-globin, probably via direct repression of HBG1; hence indirectly repressing fetal hemoglobin (HbF) level. Involved in brain development. May play a role in hematopoiesis. Essential factor in lymphopoiesis required for B-cell formation in fetal liver. May function as a modulator of the transcriptional repression activity of NR2F2. This is BCL11 transcription factor A (BCL11A) from Homo sapiens (Human).